The sequence spans 150 residues: MERNSLLVCQLLCLVARAAATSTAQTTLPSTVNSTATGVTSDSQQNTTQLPASSAAALSLPSASAVQAHSPSSFSDTYPTATALCGTLVVVGIVLCLSLASTVRSKELPSDHEPLEAWEQGSDVEAPPLPEKSPCPEHVPEIRVEIPRYV.

The N-terminal stretch at 1–20 (MERNSLLVCQLLCLVARAAA) is a signal peptide. Residues 27–54 (TLPSTVNSTATGVTSDSQQNTTQLPASS) are disordered. The segment covering 32-49 (VNSTATGVTSDSQQNTTQ) has biased composition (polar residues). Residues 83–103 (ALCGTLVVVGIVLCLSLASTV) traverse the membrane as a helical segment. A disordered region spans residues 108 to 138 (LPSDHEPLEAWEQGSDVEAPPLPEKSPCPEH).

Belongs to the HHV-5 UL124 protein family.

The protein resides in the host membrane. This is an uncharacterized protein from Human cytomegalovirus (strain Merlin) (HHV-5).